The sequence spans 775 residues: Metal transporter CNNM4 (775 aa).

Topologically, residues 1–178 are extracellular; it reads MAPVGGGGRP…LLFMVEEPGR (178 aa). 2 N-linked (GlcNAc...) asparagine glycosylation sites follow: Asn85 and Asn122. Residues 178–358 enclose the CNNM transmembrane domain; that stretch reads RFLPLWLHIL…EPYNDLVKEE (181 aa). The chain crosses the membrane as a helical span at residues 179–199; that stretch reads FLPLWLHILLITVLLVLSGIF. Topologically, residues 200–240 are cytoplasmic; the sequence is SGLNLGLMALDPMELRIVQNCGTEKERRYARKIEPIRRKGN. An intramembrane region (helical) is located at residues 241–261; the sequence is YLLCSLLLGNVLVNTSLTILL. The Cytoplasmic portion of the chain corresponds to 262-264; it reads DNL. The chain crosses the membrane as a helical span at residues 265 to 285; sequence IGSGLMAVASSTIGIVIFGEI. The Extracellular segment spans residues 286-293; the sequence is LPQALCSR. The helical transmembrane segment at 294–316 threads the bilayer; the sequence is HGLAVGANTILLTKFFMLLTFPL. Residues 317–775 are Cytoplasmic-facing; that stretch reads SFPISKLLDF…LHKASHENAI (459 aa). 2 CBS domains span residues 377 to 438 and 445 to 511; these read MTQL…CTPL and YNHP…ILDE. 3 positions are modified to phosphoserine: Ser660, Ser664, and Ser770.

The protein belongs to the ACDP family. In terms of assembly, interacts with COX11. Widely expressed. Highly expressed in heart.

It is found in the cell membrane. Functionally, probable metal transporter. The interaction with the metal ion chaperone COX11 suggests that it may play a role in sensory neuron functions. May play a role in biomineralization and retinal function. This chain is Metal transporter CNNM4 (CNNM4), found in Homo sapiens (Human).